The chain runs to 270 residues: tRNA pseudouridine synthase A (270 aa).

Catalysis depends on aspartate 60, which acts as the Nucleophile. An RNA binding region spans residues 107–111; the sequence is FHARF. Tyrosine 118 provides a ligand contact to substrate. The segment at 168–172 is interaction with tRNA; sequence QCQSR.

The protein belongs to the tRNA pseudouridine synthase TruA family. Homodimer.

It catalyses the reaction uridine(38/39/40) in tRNA = pseudouridine(38/39/40) in tRNA. Functionally, formation of pseudouridine at positions 38, 39 and 40 in the anticodon stem and loop of transfer RNAs. This Shigella boydii serotype 18 (strain CDC 3083-94 / BS512) protein is tRNA pseudouridine synthase A.